The chain runs to 732 residues: Elongation factor 2 (732 aa).

A tr-type G domain is found at 19–260 (ERIRNMGIAA…MVVKHLPNPL (242 aa)). GTP-binding positions include 28–35 (AHIDHGKT), 94–98 (DTPGH), and 148–151 (NKVD). His-597 carries the diphthamide modification.

It belongs to the TRAFAC class translation factor GTPase superfamily. Classic translation factor GTPase family. EF-G/EF-2 subfamily.

Its subcellular location is the cytoplasm. Functionally, catalyzes the GTP-dependent ribosomal translocation step during translation elongation. During this step, the ribosome changes from the pre-translocational (PRE) to the post-translocational (POST) state as the newly formed A-site-bound peptidyl-tRNA and P-site-bound deacylated tRNA move to the P and E sites, respectively. Catalyzes the coordinated movement of the two tRNA molecules, the mRNA and conformational changes in the ribosome. This is Elongation factor 2 from Thermococcus kodakarensis (strain ATCC BAA-918 / JCM 12380 / KOD1) (Pyrococcus kodakaraensis (strain KOD1)).